The primary structure comprises 266 residues: Translation initiation factor 2 subunit alpha (266 aa).

Positions 12–83 (GEILIATVKQ…RKGTVDVSLK (72 aa)) constitute an S1 motif domain.

This sequence belongs to the eIF-2-alpha family. In terms of assembly, heterotrimer composed of an alpha, a beta and a gamma chain.

Functionally, eIF-2 functions in the early steps of protein synthesis by forming a ternary complex with GTP and initiator tRNA. This chain is Translation initiation factor 2 subunit alpha, found in Saccharolobus solfataricus (strain ATCC 35092 / DSM 1617 / JCM 11322 / P2) (Sulfolobus solfataricus).